A 130-amino-acid chain; its full sequence is Ribosome-binding factor A (130 aa).

It belongs to the RbfA family. In terms of assembly, monomer. Binds 30S ribosomal subunits, but not 50S ribosomal subunits or 70S ribosomes.

The protein resides in the cytoplasm. In terms of biological role, one of several proteins that assist in the late maturation steps of the functional core of the 30S ribosomal subunit. Associates with free 30S ribosomal subunits (but not with 30S subunits that are part of 70S ribosomes or polysomes). Required for efficient processing of 16S rRNA. May interact with the 5'-terminal helix region of 16S rRNA. This is Ribosome-binding factor A from Roseiflexus castenholzii (strain DSM 13941 / HLO8).